A 287-amino-acid polypeptide reads, in one-letter code: MRIILITGISGSGKSVGLKALEDAGYFCVDNLPPTLLRALVTERLEEHGTTLAVSMDVRSASSLIGLPADLAWLRSQGHDVKVLFLTAKTDSLIARFSETRRSHPLSHRGFASDSTAERRTLTECIHEEREMLAGIEEIGHVIDTSGMRANKLRAWIKGLVESDHSPLTILFESFAFKFGVPLDADLVFDVRTLPNPHYDEALRPLTGRDAPVQDFLQTQPDATALLADIRGFVEKWLPAFKNDNRGYLTVAIGCTGGQHRSVYIVEQLAQYFRPTEHVLVRHRELD.

8-15 (GISGSGKS) contributes to the ATP binding site. Position 57–60 (57–60 (DVRS)) interacts with GTP.

This sequence belongs to the RapZ-like family.

Its function is as follows. Displays ATPase and GTPase activities. The sequence is that of Nucleotide-binding protein HEAR2885 from Herminiimonas arsenicoxydans.